The following is a 330-amino-acid chain: Aspartate--ammonia ligase (330 aa).

The protein belongs to the class-II aminoacyl-tRNA synthetase family. AsnA subfamily.

The protein localises to the cytoplasm. It carries out the reaction L-aspartate + NH4(+) + ATP = L-asparagine + AMP + diphosphate + H(+). It functions in the pathway amino-acid biosynthesis; L-asparagine biosynthesis; L-asparagine from L-aspartate (ammonia route): step 1/1. The sequence is that of Aspartate--ammonia ligase from Shigella flexneri serotype 5b (strain 8401).